Reading from the N-terminus, the 187-residue chain is Large ribosomal subunit protein bL12cx (187 aa).

Residues 1–54 (MASTTLSIATTIRSSSPLTSASTHHFLSKPTAIEFPFRLSSSSSHRAINLRPIS) constitute a chloroplast transit peptide.

This sequence belongs to the bacterial ribosomal protein bL12 family.

It is found in the plastid. Its subcellular location is the chloroplast. The protein is Large ribosomal subunit protein bL12cx (RPL12C) of Arabidopsis thaliana (Mouse-ear cress).